A 461-amino-acid polypeptide reads, in one-letter code: V-type ATP synthase beta chain (461 aa).

It belongs to the ATPase alpha/beta chains family.

Its function is as follows. Produces ATP from ADP in the presence of a proton gradient across the membrane. The V-type beta chain is a regulatory subunit. The chain is V-type ATP synthase beta chain from Streptococcus pneumoniae serotype 19F (strain G54).